Reading from the N-terminus, the 291-residue chain is Small ribosomal subunit protein uS2 (291 aa).

A disordered region spans residues 241–270; the sequence is KREPRQINRPVMSSENQAEQQTSVANENVQ. Residues 251–270 show a composition bias toward polar residues; that stretch reads VMSSENQAEQQTSVANENVQ.

It belongs to the universal ribosomal protein uS2 family.

In Mycoplasma capricolum subsp. capricolum (strain California kid / ATCC 27343 / NCTC 10154), this protein is Small ribosomal subunit protein uS2.